Reading from the N-terminus, the 122-residue chain is Selenoprotein H (122 aa).

N6-acetyllysine is present on Lys20. Positions Cys41 to Sec44 form a cross-link, cysteinyl-selenocysteine (Cys-Sec); redox-active. Position 44 (Sec44) is a non-standard amino acid, selenocysteine.

The protein belongs to the SelWTH family.

In terms of biological role, may be involved in a redox-related process. This chain is Selenoprotein H, found in Macaca fascicularis (Crab-eating macaque).